The sequence spans 358 residues: Plancitoxin-1 (358 aa).

Residues Met1–Ala26 form the signal peptide. An N-linked (GlcNAc...) asparagine glycan is attached at Asn274. Residue His303 is part of the active site.

This sequence belongs to the DNase II family. In terms of assembly, plancitoxin is a heterodimer of alpha and beta subunits; disulfide-linked by a single disulfide bond. As to expression, venom gland.

It is found in the secreted. The catalysed reaction is Endonucleolytic cleavage to nucleoside 3'-phosphates and 3'-phosphooligonucleotide end-products.. Its function is as follows. Hydrolyzes DNA with an optimum pH of 7.2. Is potently hepatotoxic. It induces caspase-independent apoptosis (on rat liver cells) through the following procedure: binding to a specific receptor in the cytoplasmic membrane, entering the cell, entering the nucleus and degrading DNA. This Acanthaster planci (Crown-of-thorns starfish) protein is Plancitoxin-1.